Reading from the N-terminus, the 669-residue chain is Dymeclin (669 aa).

A lipid anchor (N-myristoyl glycine) is attached at Gly-2.

The protein belongs to the dymeclin family. As to quaternary structure, interacts with GOLM1 and PPIB. Myristoylated in vitro; myristoylation is not essential for protein targeting to Golgi compartment.

It is found in the cytoplasm. It localises to the golgi apparatus. The protein localises to the membrane. Functionally, necessary for correct organization of Golgi apparatus. Involved in bone development. In Mus musculus (Mouse), this protein is Dymeclin (Dym).